The sequence spans 93 residues: uncharacterized protein (93 aa).

This is an uncharacterized protein from Treponema pallidum (strain Nichols).